A 1286-amino-acid polypeptide reads, in one-letter code: DNA-directed RNA polymerase subunit beta' (1286 aa).

Zn(2+) contacts are provided by C58, C60, C73, and C76. Residues D533, D535, and D537 each coordinate Mg(2+). C867, C944, C951, and C954 together coordinate Zn(2+).

Belongs to the RNA polymerase beta' chain family. In terms of assembly, the RNAP catalytic core consists of 2 alpha, 1 beta, 1 beta' and 1 omega subunit. When a sigma factor is associated with the core the holoenzyme is formed, which can initiate transcription. Mg(2+) serves as cofactor. Zn(2+) is required as a cofactor.

The catalysed reaction is RNA(n) + a ribonucleoside 5'-triphosphate = RNA(n+1) + diphosphate. DNA-dependent RNA polymerase catalyzes the transcription of DNA into RNA using the four ribonucleoside triphosphates as substrates. The protein is DNA-directed RNA polymerase subunit beta' of Tropheryma whipplei (strain TW08/27) (Whipple's bacillus).